Here is a 459-residue protein sequence, read N- to C-terminus: Magnesium transporter MRS2-11, chloroplastic (459 aa).

The transit peptide at 1–62 directs the protein to the chloroplast; it reads MALTPIPSTF…EALKVLSRSK (62 aa). A disordered region spans residues 76 to 122; that stretch reads GDYESLNVSDDDDGSDSNSSDGDNGGGRDDSKKIDSSSSSSSSDSTS. Over residues 101–110 the composition is skewed to basic and acidic residues; it reads GGRDDSKKID. Residues 111–122 show a composition bias toward low complexity; that stretch reads SSSSSSSSDSTS. 2 helical membrane passes run 397–417 and 430–450; these read LLLQVGTFCVAVGALIAGIFG and AFWLTTGGIIIGAAVAFFLMY. Residues 417–419 carry the Required for magnesium transport activity motif; it reads GMN.

This sequence belongs to the CorA metal ion transporter (MIT) (TC 1.A.35.5) family. As to expression, expressed in the green part of the plant. Preferentially expressed in the spongy mesophyll cells and stomata of young leaves but also detected in cotyledons and at the base of the leaf petioles.

It localises to the plastid. The protein localises to the chloroplast membrane. In terms of biological role, high-affinity magnesium transporter that mediates the influx of magnesium in chloroplast. This Arabidopsis thaliana (Mouse-ear cress) protein is Magnesium transporter MRS2-11, chloroplastic (MRS2-11).